A 243-amino-acid polypeptide reads, in one-letter code: Small ribosomal subunit protein eS4 (243 aa).

One can recognise an S4 RNA-binding domain in the interval 43-105 (IPLLYIVRDY…TGEHYRVLPN (63 aa)).

This sequence belongs to the eukaryotic ribosomal protein eS4 family.

The polypeptide is Small ribosomal subunit protein eS4 (rps4e) (Pyrococcus horikoshii (strain ATCC 700860 / DSM 12428 / JCM 9974 / NBRC 100139 / OT-3)).